The following is a 264-amino-acid chain: 3-methyl-2-oxobutanoate hydroxymethyltransferase (264 aa).

Residues Asp-45 and Asp-84 each contribute to the Mg(2+) site. Residues 45 to 46 (DS), Asp-84, and Lys-112 contribute to the 3-methyl-2-oxobutanoate site. Glu-114 lines the Mg(2+) pocket. Catalysis depends on Glu-181, which acts as the Proton acceptor.

This sequence belongs to the PanB family. In terms of assembly, homodecamer; pentamer of dimers. Requires Mg(2+) as cofactor.

The protein localises to the cytoplasm. The catalysed reaction is 3-methyl-2-oxobutanoate + (6R)-5,10-methylene-5,6,7,8-tetrahydrofolate + H2O = 2-dehydropantoate + (6S)-5,6,7,8-tetrahydrofolate. Its pathway is cofactor biosynthesis; (R)-pantothenate biosynthesis; (R)-pantoate from 3-methyl-2-oxobutanoate: step 1/2. Catalyzes the reversible reaction in which hydroxymethyl group from 5,10-methylenetetrahydrofolate is transferred onto alpha-ketoisovalerate to form ketopantoate. The sequence is that of 3-methyl-2-oxobutanoate hydroxymethyltransferase from Aliivibrio fischeri (strain MJ11) (Vibrio fischeri).